We begin with the raw amino-acid sequence, 442 residues long: Putative ammonium transporter sll1017 (442 aa).

The next 13 membrane-spanning stretches (helical) occupy residues 5–25 (NFPL…VGVA), 44–64 (LFLL…AMLE), 81–101 (TFDV…LMYG), 104–124 (PVLG…LDNV), 133–153 (WLFQ…AVMG), 155–175 (MYFK…YPIS), 193–213 (FAGS…AVVV), 240–260 (GVFI…LAFV), 269–289 (MLIA…ALAF), 299–319 (PNLL…TAGC), 325–345 (WSAI…TKLL), 354–374 (VGAW…VGIF), and 386–406 (IVGS…LFYV).

Belongs to the ammonia transporter channel (TC 1.A.11.2) family.

The protein localises to the cell membrane. The chain is Putative ammonium transporter sll1017 from Synechocystis sp. (strain ATCC 27184 / PCC 6803 / Kazusa).